A 155-amino-acid polypeptide reads, in one-letter code: Small ribosomal subunit protein uS7cz/uS7cy (155 aa).

This sequence belongs to the universal ribosomal protein uS7 family. Part of the 30S ribosomal subunit.

Its subcellular location is the plastid. The protein resides in the chloroplast. In terms of biological role, one of the primary rRNA binding proteins, it binds directly to 16S rRNA where it nucleates assembly of the head domain of the 30S subunit. This Pelargonium hortorum (Common geranium) protein is Small ribosomal subunit protein uS7cz/uS7cy (rps7-A).